We begin with the raw amino-acid sequence, 1148 residues long: Replication factor C subunit 1 (1148 aa).

Over residues 46–56 the composition is skewed to basic and acidic residues; that stretch reads NSSRKEDDFKQ. Disordered stretches follow at residues 46–201 and 228–380; these read NSSR…LNDE and TLAM…TNYQ. Lys50 participates in a covalent cross-link: Glycyl lysine isopeptide (Lys-Gly) (interchain with G-Cter in SUMO2). A Phosphotyrosine modification is found at Tyr67. A phosphoserine mark is found at Ser69, Ser71, Ser73, and Ser108. At Thr110 the chain carries Phosphothreonine. Residues 130–141 are compositionally biased toward polar residues; it reads RSTNSHLGTSNM. Ser156 carries the phosphoserine modification. 2 positions are modified to phosphothreonine: Thr161 and Thr163. Residues Ser164, Ser173, and Ser190 each carry the phosphoserine modification. Basic and acidic residues predominate over residues 234 to 246; the sequence is EEPKTKKARKDTE. Ser253 bears the Phosphoserine mark. The segment covering 262-271 has biased composition (basic residues); it reads EKHKYPHKVK. Phosphoserine is present on residues Ser281 and Ser283. Positions 288-308 are enriched in basic and acidic residues; the sequence is SKYESSKESQQHSKSSADKIG. A Phosphoserine modification is found at Ser312. Basic and acidic residues-rich tracts occupy residues 323–353 and 362–376; these read KRKEESSYKEIEPVASKRKENAIKLKGETKT and AKKESVSPEDSEKKR. Position 368 is a phosphoserine (Ser368). A BRCT domain is found at 402 to 492; the sequence is GAENCLEGLI…PGKKSKYEIA (91 aa). 2 stretches are compositionally biased toward basic and acidic residues: residues 496-507 and 520-538; these read EMKKESKLERTP and SKKESESKKSRPTSKRDSL. Positions 496–538 are disordered; that stretch reads EMKKESKLERTPQKNVQGKRKISPSKKESESKKSRPTSKRDSL. Ser537 carries the post-translational modification Phosphoserine. Residue 650–657 participates in ATP binding; sequence SGPPGVGK. A disordered region spans residues 1081 to 1148; that stretch reads KASRHSTSPS…RKGKGKSSKK (68 aa). Acidic residues predominate over residues 1094–1105; the sequence is EYNEELNEDDSQ. Ser1104 and Ser1106 each carry phosphoserine. Residues 1120–1124 carry the Nuclear localization signal motif; that stretch reads IKKKT. Basic and acidic residues predominate over residues 1130 to 1140; that stretch reads SKPEKDKEPRK.

This sequence belongs to the activator 1 large subunit family. Large subunit of the RFC complex, an heteropentameric complex consisting of RFC1 and four small subunits RFC2, RFC3, RFC4 and RFC5; the RFC complex interacts with PCNA and the interaction involves RFC1. As to expression, wide tissue distribution. Undetectable in placental tissue.

It is found in the nucleus. Subunit of the replication factor C (RFC) complex which acts during elongation of primed DNA templates by DNA polymerases delta and epsilon, and is necessary for ATP-dependent loading of proliferating cell nuclear antigen (PCNA) onto primed DNA. This subunit binds to the primer-template junction. Binds the PO-B transcription element as well as other GA rich DNA sequences. Can bind single- or double-stranded DNA. This chain is Replication factor C subunit 1 (RFC1), found in Homo sapiens (Human).